The primary structure comprises 231 residues: Ribosomal RNA large subunit methyltransferase E (231 aa).

G76, W78, D99, D115, and D139 together coordinate S-adenosyl-L-methionine. K179 acts as the Proton acceptor in catalysis.

It belongs to the class I-like SAM-binding methyltransferase superfamily. RNA methyltransferase RlmE family.

It localises to the cytoplasm. The catalysed reaction is uridine(2552) in 23S rRNA + S-adenosyl-L-methionine = 2'-O-methyluridine(2552) in 23S rRNA + S-adenosyl-L-homocysteine + H(+). Specifically methylates the uridine in position 2552 of 23S rRNA at the 2'-O position of the ribose in the fully assembled 50S ribosomal subunit. The chain is Ribosomal RNA large subunit methyltransferase E from Bradyrhizobium sp. (strain BTAi1 / ATCC BAA-1182).